A 421-amino-acid chain; its full sequence is Adenosylhomocysteinase (421 aa).

Residues aspartate 128 and glutamate 153 each contribute to the substrate site. 154–156 (TTT) is a binding site for NAD(+). Substrate is bound by residues lysine 183 and aspartate 187. Residues asparagine 188, 217-222 (GYGWCG), glutamate 240, 296-298 (AGH), and asparagine 343 contribute to the NAD(+) site.

This sequence belongs to the adenosylhomocysteinase family. Requires NAD(+) as cofactor.

Its subcellular location is the cytoplasm. The catalysed reaction is S-adenosyl-L-homocysteine + H2O = L-homocysteine + adenosine. The protein operates within amino-acid biosynthesis; L-homocysteine biosynthesis; L-homocysteine from S-adenosyl-L-homocysteine: step 1/1. Functionally, may play a key role in the regulation of the intracellular concentration of adenosylhomocysteine. The polypeptide is Adenosylhomocysteinase (Thermococcus kodakarensis (strain ATCC BAA-918 / JCM 12380 / KOD1) (Pyrococcus kodakaraensis (strain KOD1))).